Here is a 194-residue protein sequence, read N- to C-terminus: Calcium channel flower (194 aa).

The next 3 membrane-spanning stretches (helical) occupy residues leucine 34–isoleucine 54, valine 59–glutamate 79, and glycine 107–phenylalanine 127.

Belongs to the calcium channel flower family. Homomultimer. Associates with the dally/ magu complex.

Its subcellular location is the cell membrane. It localises to the cytoplasmic vesicle. It is found in the secretory vesicle. The protein resides in the synaptic vesicle membrane. The protein localises to the presynaptic cell membrane. Its subcellular location is the endosome. Its activity is regulated as follows. Channel activity is inhibited by La(3+), which reduces Ca(2+) influx and thus inhibits it's function in promoting activity-dependent bulk endocytosis (ADBE) in response to high stimuli. Transmembrane protein which mediates synaptic endocytosis, fitness-based cell culling, neuronal culling, morphogen gradient scaling, and calcium transport. Regulates synaptic endocytosis and hence couples exo- with endocytosis. Controls two major modes of synaptic vesicle (SV) endocytosis in the synaptic boutons of neuromuscular junctions (NMJs); Ca(2+) channel-independent Clathrin-mediated endocytosis (CME) in response to mild stimulation, and Ca(2+) channel-dependent activity-dependent bulk endocytosis (ADBE) in response to strong stimulation. Functions in ADBE and subsequent SV reformation from bulk endosomes by initiating Ca(2+) channel-dependent phosphatidylinositol 4,5-bisphosphate (PtdIns(4,5)P2) compartmentalization in synaptic boutons. There it acts at the periactive zone to provide the low Ca(2+) levels required to initiate Calcineurin activation and upregulate PtdIns(4,5)P2. Conversely PtdIns(4,5)P2 enhances fwe Ca(2+) channel-activity, establishing a positive feedback loop that induces PtdIns(4,5)P2 microdomain at the periactive zone. These microdomains trigger bulk membrane invagination (i.e. ADBE) by triggering actin polymerization while also promoting localization of fwe to bulk endosomes, thereby removing the ADBE trigger to reduce endocytosis and prevent excess membrane uptake. PtdIns(4,5)P2 then promotes SV reformation from the bulk endosomes, to coordinate ADBE and subsequent SV reformation. Different combinations of the flower isoforms at the cell membrane are also required for the identification and elimination of suboptimal or supernumerary cells during development, regeneration, and adulthood. Required for the recognition and elimination of unfit cells in the developing wing during cell competition. In the developing pupal retina, mediates the elimination of unwanted postmitotic neurons, including supernumerary photoreceptor neurons that form at the periphery of the retina and are contained within incomplete ommatidia units. Also required for efficient elimination and replacement of old neurons by newly generated neurons during regeneration in the adult brain following mechanical injury. Downstream of the flower fitness fingerprints, cells identified as unwanted or unfit are eliminated via apoptosis through the expression of ahuizotl (azot). However, the cells marked for elimination by the flower isoforms only undergo apoptosis if additional thresholds are met; (1) their neighboring fit/healthy cells express different levels of the fwe isoforms, and (2) the levels of the protective signal SPARC expressed by the loser or unwanted cells are unable to inhibit caspase activation. These additional thresholds for flower-mediated apoptosis, allows useful cells to recover from transient and limited stress before they are unnecessarily eliminated. Functions with dally and magu in a mechanism of scaling, which utilises apoptosis to ensure that the dpp morphogen gradient, which mediates organ growth, remains proportional to the size of the growing wing. In this mechanism, fwe represses dally- and Magu-dependent activity in expanding the gradient, and dally/Magu inhibits fwe-dependent apoptosis to keep cell death rate low. When the levels of these different proteins are optimally regulated the gradient correctly scales with organ growth but when this fails, fwe-mediated apoptosis is activated to trim the developing tissue to match the correct size of the gradient. This Drosophila erecta (Fruit fly) protein is Calcium channel flower.